The primary structure comprises 202 residues: LexA repressor (202 aa).

Residues 28-48 (RAEIAQRLGFRSPNAAEEHLK) constitute a DNA-binding region (H-T-H motif). Catalysis depends on for autocatalytic cleavage activity residues S119 and K156.

It belongs to the peptidase S24 family. As to quaternary structure, homodimer.

The enzyme catalyses Hydrolysis of Ala-|-Gly bond in repressor LexA.. Its function is as follows. Represses a number of genes involved in the response to DNA damage (SOS response), including recA and lexA. Binds to the 16 bp palindromic sequence 5'-CTGTATATATATACAG-3'. In the presence of single-stranded DNA, RecA interacts with LexA causing an autocatalytic cleavage which disrupts the DNA-binding part of LexA, leading to derepression of the SOS regulon and eventually DNA repair. The chain is LexA repressor from Escherichia coli (strain K12 / MC4100 / BW2952).